A 1503-amino-acid polypeptide reads, in one-letter code: MMAKNKEPRPPSYTVSVVGLSGTEKDKGNCGVGKSCLCNRFVRSKADEYYPEHTSVLSTIDFGGRVVNNDHFLYWGDITQNGEDGVECKIHVIEQTEFIDDQTFLPHRSTNLQPYIKRAAASKLQSAEKLMYICTDQLGLEQDFEQKQMPEGKLNVDGFLLCIDVSQGCNRKFDDQLKFVNNLFVQLSKSKKPVIIAATKCDECVDHYLREVQAFASNKKNLLVVETSARFNVNIETCFTALVQMLDKTRGKPKIIPYLDAYKTQRQLVVTATDKFEKLVQTVRDYHATWKTVSNKLKNHPDYEEYINLEGTRKARNTFSKHIEQLKQEHIRKRREEYISTLPRAFNTLLPDLEEIEHLNWLEALKLMEKRADFQLCFVVLEKTPWDETDHIDKINDRRIPFDLLSTLEAEKVYQNHVQHLISEKRRIEMKEKFKKTLEKIQFISPGQPWEEVMCFVMEDEAFKYITEADSKEVYGRHQREIVEKAKEEFQEMLFEHSELFYDLDLNATPSSDKMSEIHTVLSEEPRYKALQKLAPDRESLLLKHIGFVYHPTKETCLSGQYCTDIKVENLLATSLLEMDHNRVRLYHDSTNIDKVNLFILGKDGLAQELANEIRTQSTDDEYALDGKIYELDLRPVDAKSPYILSQLWTAAFKPHGCFCVFNSIESLSFIGEFIGKIRTEASQIRKDKYMTNLPFTLILANQRDSISKNLPILRHQGQQLANKLQCPFVDVPTGTYPRKFNESQIKQALRGVLESVKHNLDVVSPVPINKDVSEADLRIVMCAMCGDPFSVDLILSPFLDSHSCSAAQAGQNNSLMLDKIIGEKRRRIQITILSYHSSIGVRKDELVHGYILVYSAKRKASMGMLRAFLSEVQDTIPVQLVAVTDSQADFFENEAIKELMTEGEHIATEITAKFTALYSLSQYHRQTEVFTLFFSDVLEKKNMIENSYLSDNTRESTHQSEDVFLPSPRDCFPYNNYPDSDDDTEAPPPYSPIGDDVQLLPTPSDRSRYRLDLEGNEYPVHSTPNCHDHERNHKVPPPIKPKPVVPKTNVKKLDPNLLKTIEAGIGKNPRKQTSRVPLAHPEDMDSSDNYVEPLDTIFKQKGYSDEIYVVPDDSQNRIIKIRNSFVNNTQGDEENGFSDRTSKGHGERRPSKYKYKSKTLFSKAKSYYRRTHSDASDDEAFTTSKTKRKGRHRGSEEDPLLSPVETWKGGIDNPAITSDQEVDDKKIKKKTHKVKEDKKQKKKTKTFNPPTRRNWESNYFGMPLQDLVTAEKPIPLFVEKCVEFIEDTGLCTEGLYRVSGNKTDQDNIQKQFDQDHNINLASMEVTVNAVAGALKAFFADLPDPLIPYSLHPELLEAAKIPDKTERFHALKEIVKKFHPVNYDVFRYVITHLNRVSQQNKINLMTADNLSICFWPTLMRPDFENREFLSTTKIHQSVVETFIQQCQFFFYNGEIVETANTVAPPPTSNPGQLVESMVPLQLPPPLQPQLIQPQLQTDPLGII.

4 consecutive FF domains span residues 267 to 325, 366 to 420, 427 to 481, and 482 to 548; these read QLVV…HIEQ, KLME…HVQH, RIEM…HQRE, and IVEK…HIGF. Residue Y550 is modified to 3'-nitrotyrosine. 2 positions are modified to phosphoserine: S590 and S765. The pG1 pseudoGTPase domain maps to 590–763; sequence STNIDKVNLF…LESVKHNLDV (174 aa). In terms of domain architecture, pG2 pseudoGTPase spans 779-944; that stretch reads RIVMCAMCGD…FSDVLEKKNM (166 aa). S951 and S968 each carry phosphoserine. Disordered stretches follow at residues 975–1004, 1022–1050, and 1069–1091; these read YNNY…LPTP, HSTP…PKTN, and NPRK…SDNY. Residues 1036–1045 are compositionally biased toward pro residues; the sequence is VPPPIKPKPV. At S1115 the chain carries Phosphoserine. Disordered stretches follow at residues 1129-1157 and 1169-1255; these read NTQG…YKYK and YRRT…TRRN. Residues 1141–1151 are compositionally biased toward basic and acidic residues; the sequence is RTSKGHGERRP. A phosphoserine mark is found at S1196, S1203, and S1219. Residues 1263–1450 enclose the Rho-GAP domain; that stretch reads MPLQDLVTAE…TFIQQCQFFF (188 aa).

As to quaternary structure, may interact with RASA1/p120GAP. As to expression, expressed in spinal cord, cerebellum, kidney, testis and lung.

It is found in the cytoplasm. Its subcellular location is the cell membrane. Its function is as follows. GTPase-activating protein for Rho family members. In Mus musculus (Mouse), this protein is Rho GTPase-activating protein 5 (Arhgap5).